The sequence spans 855 residues: MNESFDKDFSNHTPMMQQYLKLKAQHPEILLFYRMGDFYELFYDDAKRASQLLDISLTKRGASAGEPIPMAGIPHHAVENYLAKLVNQGESVAICEQIGDPATSKGPVERKVVRIVTPGTISDEALLQERQDNLLAAIWQDGKGYGYATLDISSGRFRLSEPADRETMAAELQRTNPAELLYAEDFAEMALIEGRRGLRRRPLWEFEIDTARQQLNLQFGTRDLVGFGVENASRGLCAAGCLLQYVKDTQRTSLPHIRSITMERQQDSIIMDAATRRNLEITQNLAGGVENTLAAVLDCTVTPMGSRMLKRWLHMPVRNTDILRERQQTIGALQDTVSELQPVLRQVGDLERILARLALRTARPRDLARMRHAFQQLPELHAQLETVDSAPVQALRKKMGDFAELRDLLERAIIDAPPVLVRDGGVIAPGYHEELDEWRALADGATDYLDRLEIRERERTGLDTLKVGYNAVHGYYIQISRGQSHLAPINYVRRQTLKNAERYIIPELKEYEDKVLTSKGKALALEKQLYDELFDLLLPHLADLQQSANALAELDVLVNLAERAWTLNYTCPTFTDKPGIRITEGRHPVVEQVLNEPFIANPLNLSPQRRMLIITGPNMGGKSTYMRQTALIALLAYIGSYVPAQNVEIGPIDRIFTRVGAADDLASGRSTFMVEMTETANILHNATENSLVLMDEIGRGTSTYDGLSLAWACAENLANKIKALTLFATHYFELTQLPEKMEGVANVHLDALEHGDTIAFMHSVQDGAASKSYGLAVAALAGVPKEVIKRARQKLRELESISPNAAATQVDGTQMSLLAAPEETSPAVEALENLDPDSLTPRQALEWIYRLKSLV.

An ATP-binding site is contributed by 616–623; sequence GPNMGGKS.

It belongs to the DNA mismatch repair MutS family.

This protein is involved in the repair of mismatches in DNA. It is possible that it carries out the mismatch recognition step. This protein has a weak ATPase activity. In Salmonella gallinarum (strain 287/91 / NCTC 13346), this protein is DNA mismatch repair protein MutS.